Here is a 702-residue protein sequence, read N- to C-terminus: MADS-box MEF2 type transcription factor MIG1 (702 aa).

The MADS-box domain maps to 1–61 (MGRRKIEIKA…KKLYEYSSGD (61 aa)). 2 disordered regions span residues 73 to 608 (GGAT…NIDT) and 658 to 702 (PSFL…KVDS). The span at 86-96 (GGDDDDEEEGD) shows a compositional bias: acidic residues. A compositionally biased stretch (pro residues) spans 132–144 (ASPPIPNGVPFPP). Residues 145 to 155 (HGHGVPRGHTP) show a composition bias toward low complexity. Residues 180-195 (GSPQVNGFGFGQQQSM) are compositionally biased toward polar residues. The span at 201–241 (TTMPPHMPPQMAPGPPFPYPQHPQHPPHPPHPPHPPHPQQP) shows a compositional bias: pro residues. 3 stretches are compositionally biased toward low complexity: residues 273 to 284 (PMGMQRHSVSPP), 326 to 343 (ESPQ…QQPE), and 350 to 371 (EQQQ…QSEP). Polar residues predominate over residues 456–465 (VDESTSNASE). Low complexity-rich tracts occupy residues 487-512 (RASI…SLRA) and 530-553 (DGSG…DATS). Positions 554 to 567 (QSTRQNDSHSSTNM) are enriched in polar residues. Positions 587–600 (PPNPFAPKRPPQHP) are enriched in pro residues. Basic and acidic residues predominate over residues 693-702 (NEPKRVKVDS).

It belongs to the MEF2 family. In terms of assembly, interacts with MAPK MPS1.

The protein localises to the nucleus. Transcription factor acting downstream of the MPS1 MAP kinase (MAPK) cascade during conidiation and plant infection. Required for overcoming plant defense responses and the differentiation of secondary infectious hyphae in live plant cells. The polypeptide is MADS-box MEF2 type transcription factor MIG1 (Pyricularia oryzae (strain 70-15 / ATCC MYA-4617 / FGSC 8958) (Rice blast fungus)).